Here is a 99-residue protein sequence, read N- to C-terminus: Aspartyl/glutamyl-tRNA(Asn/Gln) amidotransferase subunit C (99 aa).

Belongs to the GatC family. Heterotrimer of A, B and C subunits.

The enzyme catalyses L-glutamyl-tRNA(Gln) + L-glutamine + ATP + H2O = L-glutaminyl-tRNA(Gln) + L-glutamate + ADP + phosphate + H(+). It carries out the reaction L-aspartyl-tRNA(Asn) + L-glutamine + ATP + H2O = L-asparaginyl-tRNA(Asn) + L-glutamate + ADP + phosphate + 2 H(+). In terms of biological role, allows the formation of correctly charged Asn-tRNA(Asn) or Gln-tRNA(Gln) through the transamidation of misacylated Asp-tRNA(Asn) or Glu-tRNA(Gln) in organisms which lack either or both of asparaginyl-tRNA or glutaminyl-tRNA synthetases. The reaction takes place in the presence of glutamine and ATP through an activated phospho-Asp-tRNA(Asn) or phospho-Glu-tRNA(Gln). The protein is Aspartyl/glutamyl-tRNA(Asn/Gln) amidotransferase subunit C of Thermobifida fusca (strain YX).